Reading from the N-terminus, the 743-residue chain is Fork head transcription factor 1 (743 aa).

The FHA domain occupies 39-94; the sequence is VTMGRKASNSSDCDVHLGDTKAISRQHAKIFYSFPNQRFEISVMGKNGAFVDGEFV. 3 disordered regions span residues 214–291, 411–450, and 529–743; these read QPPK…ATQK, GISAGKTEQLNPQKETSRSKTHTSRGENVEDRPQSLLQNG, and QMQG…SSYT. The span at 221-230 shows a compositional bias: polar residues; the sequence is VSPSSIQRLS. Positions 291–385 form a DNA-binding region, fork-head; that stretch reads KPNLSYANLI…EGNFFRRTKK (95 aa). The segment covering 434–443 has biased composition (basic and acidic residues); that stretch reads SRGENVEDRP. Over residues 529–539 the composition is skewed to low complexity; sequence QMQGPQQVQQQ. A compositionally biased stretch (polar residues) spans 562-576; the sequence is NITSPSPSISVTQRP. Over residues 614 to 624 the composition is skewed to low complexity; sequence SAGPSSVRSSS. Composition is skewed to polar residues over residues 625–643, 670–686, and 695–726; these read YNSTASESKSEITSHQNLH, TGNQGQRMNSIGNASSF, and ENGSFDTNAKNGNNVDDSSSVRGMNLPSNSSD.

It localises to the nucleus. Functionally, acts as a transcriptional activator for ribosomal protein genes (RPG) that contain a HomolE UAS (upstream activating sequence) in addition to a HomolD promoter element; HomolD plays the role of a TATA box in RPG promoters that do not contain a canonical TATA sequence. Binds to HomolE elements with consensus sequence 3'-ACCCTACCCT-5' (or its inverted form AGGGTAGGGT). The sequence is that of Fork head transcription factor 1 from Schizosaccharomyces pombe (strain 972 / ATCC 24843) (Fission yeast).